The primary structure comprises 205 residues: Proteasome subunit beta type-3 (205 aa).

At S2 the chain carries N-acetylserine. An N6-acetyllysine modification is found at K77.

The protein belongs to the peptidase T1B family. As to quaternary structure, the 26S proteasome consists of a 20S proteasome core and two 19S regulatory subunits. The 20S proteasome core is a barrel-shaped complex made of 28 subunits that are arranged in four stacked rings. The two outer rings are each formed by seven alpha subunits, and the two inner rings are formed by seven beta subunits. The proteolytic activity is exerted by three beta-subunits PSMB5, PSMB6 and PSMB7.

Its subcellular location is the cytoplasm. It localises to the nucleus. In terms of biological role, non-catalytic component of the 20S core proteasome complex involved in the proteolytic degradation of most intracellular proteins. This complex plays numerous essential roles within the cell by associating with different regulatory particles. Associated with two 19S regulatory particles, forms the 26S proteasome and thus participates in the ATP-dependent degradation of ubiquitinated proteins. The 26S proteasome plays a key role in the maintenance of protein homeostasis by removing misfolded or damaged proteins that could impair cellular functions, and by removing proteins whose functions are no longer required. Associated with the PA200 or PA28, the 20S proteasome mediates ubiquitin-independent protein degradation. This type of proteolysis is required in several pathways including spermatogenesis (20S-PA200 complex) or generation of a subset of MHC class I-presented antigenic peptides (20S-PA28 complex). This chain is Proteasome subunit beta type-3 (PSMB3), found in Bos taurus (Bovine).